Here is a 260-residue protein sequence, read N- to C-terminus: Repetitive secreted protein 1 (260 aa).

The first 20 residues, 1-20, serve as a signal peptide directing secretion; that stretch reads MKLSFTIVATAALVASCTFA.

Rsp1 is processed by the subtilisin-like endoprotease kex2. Cleavage by kex2 generates 11 peptides.

Its subcellular location is the secreted. Functionally, repetitive secreted protein essential for pathogenic development. Hum3 and rsp1 together are pathogenicity proteins that share an essential function in early stages of the infection. This chain is Repetitive secreted protein 1, found in Mycosarcoma maydis (Corn smut fungus).